Consider the following 179-residue polypeptide: ATP synthase subunit delta (179 aa).

It belongs to the ATPase delta chain family. In terms of assembly, F-type ATPases have 2 components, F(1) - the catalytic core - and F(0) - the membrane proton channel. F(1) has five subunits: alpha(3), beta(3), gamma(1), delta(1), epsilon(1). F(0) has three main subunits: a(1), b(2) and c(10-14). The alpha and beta chains form an alternating ring which encloses part of the gamma chain. F(1) is attached to F(0) by a central stalk formed by the gamma and epsilon chains, while a peripheral stalk is formed by the delta and b chains.

Its subcellular location is the cell inner membrane. Its function is as follows. F(1)F(0) ATP synthase produces ATP from ADP in the presence of a proton or sodium gradient. F-type ATPases consist of two structural domains, F(1) containing the extramembraneous catalytic core and F(0) containing the membrane proton channel, linked together by a central stalk and a peripheral stalk. During catalysis, ATP synthesis in the catalytic domain of F(1) is coupled via a rotary mechanism of the central stalk subunits to proton translocation. This protein is part of the stalk that links CF(0) to CF(1). It either transmits conformational changes from CF(0) to CF(1) or is implicated in proton conduction. This Maricaulis maris (strain MCS10) (Caulobacter maris) protein is ATP synthase subunit delta.